The following is a 706-amino-acid chain: Termination factor NPH-I homolog (706 aa).

The Helicase ATP-binding domain maps to 62-227 (IGQGENTRGL…VPCFNMLSGR (166 aa)). 75-82 (HQMGMGKT) provides a ligand contact to ATP. The short motif at 168–171 (DEAH) is the DEAH box element. Residues 417–599 (QCLQPLKVLE…HLNSAFRDLL (183 aa)) form the Helicase C-terminal domain.

This sequence belongs to the DEAD box helicase family. DEAH subfamily. Part of the viral DNA-directed RNA polymerase that consists of 8 polII-like subunits (RPB1, RPB2, RPB3, RPB5, RPB6, RPB7, RPB9, RPB10), a capping enzyme and a termination factor.

It localises to the virion. In terms of biological role, putative DNA-dependent ATPase required for providing the needed energy to achieve the termination of early transcripts. The polypeptide is Termination factor NPH-I homolog (African swine fever virus (isolate Warthog/Namibia/Wart80/1980) (ASFV)).